We begin with the raw amino-acid sequence, 429 residues long: UDP-N-acetylglucosamine 1-carboxyvinyltransferase (429 aa).

Phosphoenolpyruvate is bound at residue 22 to 23; it reads KN. UDP-N-acetyl-alpha-D-glucosamine is bound at residue arginine 102. Residue cysteine 126 is the Proton donor of the active site. Residue cysteine 126 is modified to 2-(S-cysteinyl)pyruvic acid O-phosphothioketal. UDP-N-acetyl-alpha-D-glucosamine contacts are provided by residues 131-135, aspartate 316, and isoleucine 338; that span reads RPVDL.

Belongs to the EPSP synthase family. MurA subfamily.

The protein resides in the cytoplasm. The enzyme catalyses phosphoenolpyruvate + UDP-N-acetyl-alpha-D-glucosamine = UDP-N-acetyl-3-O-(1-carboxyvinyl)-alpha-D-glucosamine + phosphate. It participates in cell wall biogenesis; peptidoglycan biosynthesis. In terms of biological role, cell wall formation. Adds enolpyruvyl to UDP-N-acetylglucosamine. This chain is UDP-N-acetylglucosamine 1-carboxyvinyltransferase, found in Methylobacterium nodulans (strain LMG 21967 / CNCM I-2342 / ORS 2060).